A 238-amino-acid polypeptide reads, in one-letter code: 2-C-methyl-D-erythritol 4-phosphate cytidylyltransferase (238 aa).

The protein belongs to the IspD/TarI cytidylyltransferase family. IspD subfamily.

It catalyses the reaction 2-C-methyl-D-erythritol 4-phosphate + CTP + H(+) = 4-CDP-2-C-methyl-D-erythritol + diphosphate. It participates in isoprenoid biosynthesis; isopentenyl diphosphate biosynthesis via DXP pathway; isopentenyl diphosphate from 1-deoxy-D-xylulose 5-phosphate: step 2/6. In terms of biological role, catalyzes the formation of 4-diphosphocytidyl-2-C-methyl-D-erythritol from CTP and 2-C-methyl-D-erythritol 4-phosphate (MEP). In Acinetobacter baumannii (strain ACICU), this protein is 2-C-methyl-D-erythritol 4-phosphate cytidylyltransferase.